The sequence spans 331 residues: Phenylalanine--tRNA ligase alpha subunit (331 aa).

Residue Glu256 coordinates Mg(2+).

It belongs to the class-II aminoacyl-tRNA synthetase family. Phe-tRNA synthetase alpha subunit type 1 subfamily. In terms of assembly, tetramer of two alpha and two beta subunits. Mg(2+) is required as a cofactor.

The protein resides in the cytoplasm. It carries out the reaction tRNA(Phe) + L-phenylalanine + ATP = L-phenylalanyl-tRNA(Phe) + AMP + diphosphate + H(+). In Colwellia psychrerythraea (strain 34H / ATCC BAA-681) (Vibrio psychroerythus), this protein is Phenylalanine--tRNA ligase alpha subunit.